Here is a 176-residue protein sequence, read N- to C-terminus: Ribosome maturation factor RimM (176 aa).

Positions 92–165 constitute a PRC barrel domain; sequence EDEFLYSDLI…RLVVVPPVYA (74 aa).

Belongs to the RimM family. In terms of assembly, binds ribosomal protein uS19.

Its subcellular location is the cytoplasm. Its function is as follows. An accessory protein needed during the final step in the assembly of 30S ribosomal subunit, possibly for assembly of the head region. Essential for efficient processing of 16S rRNA. May be needed both before and after RbfA during the maturation of 16S rRNA. It has affinity for free ribosomal 30S subunits but not for 70S ribosomes. The chain is Ribosome maturation factor RimM from Paramagnetospirillum magneticum (strain ATCC 700264 / AMB-1) (Magnetospirillum magneticum).